Here is a 151-residue protein sequence, read N- to C-terminus: FUN14 domain-containing protein 1 (151 aa).

A YXXL motif is present at residues 14–17; it reads YEVL. A run of 3 helical transmembrane segments spans residues 44–64, 71–91, and 130–150; these read YSVA…GFLF, AATA…GGYI, and FIKK…LGLA.

This sequence belongs to the FUN14 family.

The protein localises to the mitochondrion outer membrane. Its function is as follows. Acts as an activator of hypoxia-induced mitophagy, an important mechanism for mitochondrial quality control. This Xenopus tropicalis (Western clawed frog) protein is FUN14 domain-containing protein 1 (fundc1).